Reading from the N-terminus, the 153-residue chain is Aspartate carbamoyltransferase regulatory chain (153 aa).

Residues cysteine 109, cysteine 114, cysteine 138, and cysteine 141 each coordinate Zn(2+).

Belongs to the PyrI family. Contains catalytic and regulatory chains. It depends on Zn(2+) as a cofactor.

In terms of biological role, involved in allosteric regulation of aspartate carbamoyltransferase. This is Aspartate carbamoyltransferase regulatory chain from Shigella flexneri serotype 5b (strain 8401).